A 195-amino-acid chain; its full sequence is Imidazoleglycerol-phosphate dehydratase (195 aa).

It belongs to the imidazoleglycerol-phosphate dehydratase family.

The protein localises to the cytoplasm. It catalyses the reaction D-erythro-1-(imidazol-4-yl)glycerol 3-phosphate = 3-(imidazol-4-yl)-2-oxopropyl phosphate + H2O. It participates in amino-acid biosynthesis; L-histidine biosynthesis; L-histidine from 5-phospho-alpha-D-ribose 1-diphosphate: step 6/9. The sequence is that of Imidazoleglycerol-phosphate dehydratase from Thermotoga neapolitana (strain ATCC 49049 / DSM 4359 / NBRC 107923 / NS-E).